A 629-amino-acid polypeptide reads, in one-letter code: tRNA uridine 5-carboxymethylaminomethyl modification enzyme MnmG (629 aa).

Residue G13–G18 coordinates FAD. G273–F287 provides a ligand contact to NAD(+).

Belongs to the MnmG family. Homodimer. Heterotetramer of two MnmE and two MnmG subunits. The cofactor is FAD.

It is found in the cytoplasm. Functionally, NAD-binding protein involved in the addition of a carboxymethylaminomethyl (cmnm) group at the wobble position (U34) of certain tRNAs, forming tRNA-cmnm(5)s(2)U34. This is tRNA uridine 5-carboxymethylaminomethyl modification enzyme MnmG from Alkalilimnicola ehrlichii (strain ATCC BAA-1101 / DSM 17681 / MLHE-1).